Reading from the N-terminus, the 312-residue chain is MEFTHLDENGMVRMADVSGKPPTRRKACASGRIVMLPETIALLRRKELPKGNVLAAAKIAGIQAAKQTSTLIPLCHQLNLSWIDIEFEIGDDSIGIAATVITRESTGVEMEALAAVSVAALTIYDMCKAVDKTMEISAIRLDHKTGGKSSAAEYHPRTAILVMSDSIAAGTATDHSGAILREGLQKAGCAVEALTITPDEPVEIAATVEAWIGEGIEFIVTSGGTGLGPRDLAIDTLAPKFTRRLPGVEQELLRWGQTKTRTAMLSRLAAGVIGNTVVVCLPGSTSAAKDALEVLVPAIFHAFPMLKGDGHA.

The interval 1 to 155 is molybdenum cofactor biosynthesis protein C; the sequence is MEFTHLDENG…GGKSSAAEYH (155 aa). Substrate is bound by residues 74-76 and 110-111; these read LCH and ME. The active site involves aspartate 125. The interval 156-312 is molybdenum cofactor biosynthesis protein B; the sequence is PRTAILVMSD…FPMLKGDGHA (157 aa).

The protein in the N-terminal section; belongs to the MoaC family. It in the C-terminal section; belongs to the MoaB/Mog family.

The catalysed reaction is (8S)-3',8-cyclo-7,8-dihydroguanosine 5'-triphosphate = cyclic pyranopterin phosphate + diphosphate. It functions in the pathway cofactor biosynthesis; molybdopterin biosynthesis. Its function is as follows. Catalyzes the conversion of (8S)-3',8-cyclo-7,8-dihydroguanosine 5'-triphosphate to cyclic pyranopterin monophosphate (cPMP). The polypeptide is Molybdenum cofactor biosynthesis bifunctional protein (moaCB) (Chlorobaculum tepidum (strain ATCC 49652 / DSM 12025 / NBRC 103806 / TLS) (Chlorobium tepidum)).